Reading from the N-terminus, the 272-residue chain is MTLQEQIMKALHVQPVIDPKAEIRKRVDFLKDYVKKTGAKGFVLGISGGQDSTLAGRLAQLAVEEIRNEGGNVTFIAVRLPYKVQKDEDDAQLALQFIQADQSVAFDIASTVDAFSNQYENLLDESLTDFNKGNVKARIRMVTQYAIGGQKGLLVIGTDHAAEAVTGFFTKFGDGGADLLPLTGLTKRQGRALLQELGADERLYLKMPTADLLDEKPGQADETELGITYDQLDDYLEGKTVPADVAEKIEKRYTVSEHKRQVPASMFDDWWK.

45-52 (GISGGQDS) contributes to the ATP binding site. D51 serves as a coordination point for Mg(2+). R138 contacts deamido-NAD(+). T158 provides a ligand contact to ATP. E163 lines the Mg(2+) pocket. Deamido-NAD(+)-binding residues include K171 and D178. ATP-binding residues include K187 and T209. 258-259 (HK) contributes to the deamido-NAD(+) binding site.

Belongs to the NAD synthetase family. Homodimer.

It catalyses the reaction deamido-NAD(+) + NH4(+) + ATP = AMP + diphosphate + NAD(+) + H(+). Its pathway is cofactor biosynthesis; NAD(+) biosynthesis; NAD(+) from deamido-NAD(+) (ammonia route): step 1/1. Its function is as follows. Catalyzes the ATP-dependent amidation of deamido-NAD to form NAD. Uses ammonia as a nitrogen source. This is NH(3)-dependent NAD(+) synthetase from Bacillus cereus (strain 03BB102).